The following is a 93-amino-acid chain: Large ribosomal subunit protein bL27 (93 aa).

Positions 1-22 are disordered; the sequence is MAHKKAGGSSRNGRDSEGRRLG.

The protein belongs to the bacterial ribosomal protein bL27 family.

This is Large ribosomal subunit protein bL27 from Methylobacterium sp. (strain 4-46).